Consider the following 334-residue polypeptide: Mitochondrial ribosome-associated GTPase 1 (334 aa).

One can recognise a CP-type G domain in the interval 36–209; that stretch reads AKGLKKMQSS…LLDTPGVLAP (174 aa). Residues 83 to 86, 153 to 158, and glycine 205 contribute to the GTP site; these read NKMD and NVGKSS.

The protein belongs to the TRAFAC class YlqF/YawG GTPase family. MTG1 subfamily. In terms of assembly, associates with the mitochondrial ribosome large subunit; the association occurs in a GTP-dependent manner.

The protein localises to the mitochondrion inner membrane. Its function is as follows. Plays a role in the regulation of the mitochondrial ribosome assembly and of translational activity. Displays mitochondrial GTPase activity. In Homo sapiens (Human), this protein is Mitochondrial ribosome-associated GTPase 1 (MTG1).